The sequence spans 682 residues: Iron-phytosiderophore transporter yellow stripe 1 (682 aa).

Residues 1-36 (MDLARRGGAAGADDEGEIERHEPAPEDMESDPAAAR) form a disordered region. 15 consecutive transmembrane segments (helical) span residues 56 to 76 (GVVAALLIGFMYSVIVMKIAL), 79 to 99 (GLVPTLNVSAALMAFLALRGW), 124 to 144 (CAVACYTIAFGGGFGSTLLGL), 167 to 187 (GFGWMAGFVAAISFAGLLSLI), 236 to 256 (LSFVWSFFQWFYTGGEVCGFV), 288 to 308 (LVNISTLLGAILSWGILWPLI), 334 to 354 (FLCIALIMGDGTYHFFKVFGV), 396 to 416 (FPAWAAYAGYAALTVVSAVII), 428 to 448 (VIVAYVLAPLLGFANSYGTGL), 460 to 480 (IALFIFAAWAGRDNGVIAGLA), 514 to 534 (VAQFIGTAMGCVVAPLTFLLF), 549 to 569 (APYGLIYRNMAILGVEGFSVL), 574 to 594 (LALSAGFFAFAFVFSVARDVL), 612 to 632 (FLVGGSFAIDMCVGSLAVFVW), and 640 to 660 (AVFMVPAVASGLICGDGIWTF).

The protein belongs to the YSL (TC 2.A.67.2) family. In terms of tissue distribution, expressed in roots of young maize seedlings. Not detected in leaves of iron-sufficient plants, but accumulates in roots and leaves of iron-deficient plants.

It is found in the membrane. Functionally, involved in Fe(3+) uptake. Acts as a proton-coupled symporter for phytosiderophore- and nicotianamine-chelated metals. Capable of transporting either Fe(2+)-nicotianamine or Fe(3+)-phytosiderophore. May transport iron, zinc, nickel, copper and, at a lower rate, manganese and cadmium. This chain is Iron-phytosiderophore transporter yellow stripe 1 (YS1), found in Zea mays (Maize).